A 401-amino-acid polypeptide reads, in one-letter code: Tyrosine--tRNA ligase (401 aa).

Positions 42–51 match the 'HIGH' region motif; that stretch reads PTAPDLHLGH. Residues 226–230 carry the 'KMSKS' region motif; the sequence is KMSKS. Residue Lys229 participates in ATP binding. Residues 336–397 enclose the S4 RNA-binding domain; that stretch reads IALAQLLKQI…GKRRIAKLSI (62 aa).

This sequence belongs to the class-I aminoacyl-tRNA synthetase family. TyrS type 2 subfamily. Homodimer.

It localises to the cytoplasm. The enzyme catalyses tRNA(Tyr) + L-tyrosine + ATP = L-tyrosyl-tRNA(Tyr) + AMP + diphosphate + H(+). Catalyzes the attachment of tyrosine to tRNA(Tyr) in a two-step reaction: tyrosine is first activated by ATP to form Tyr-AMP and then transferred to the acceptor end of tRNA(Tyr). This chain is Tyrosine--tRNA ligase, found in Legionella pneumophila (strain Lens).